The following is a 374-amino-acid chain: Mitochondrial inner membrane protein oxa1-1 (374 aa).

A helical membrane pass occupies residues 77–97 (TINVYAGAPWWVSIILTTLGV). Residues 98 to 159 (RLALTPVMIA…GIYLKHNVNP (62 aa)) lie on the Mitochondrial intermembrane side of the membrane. Residues 160–180 (FAIFILPLTQSAVFFSFFYAI) form a helical membrane-spanning segment. At 181–242 (RKMSRLSVDG…TIGNSTNWRT (62 aa)) the chain is on the mitochondrial matrix side. Residues 243–263 (FFFLCCLLSPLLTAKLPAAIF) form a helical membrane-spanning segment. Residues 264–374 (MYWIPSSLFN…SKKNSKKQSN (111 aa)) lie on the Mitochondrial intermembrane side of the membrane.

Belongs to the OXA1/ALB3/YidC family.

Its subcellular location is the mitochondrion inner membrane. Its function is as follows. Required for the insertion of integral membrane proteins into the mitochondrial inner membrane. Essential for the activity and assembly of cytochrome c oxidase. Not essential for viability, while oxa102 is essential. When both genes are deleted the cell is non-viable, suggesting that oxa101 act as a back-up for oxa102. The polypeptide is Mitochondrial inner membrane protein oxa1-1 (oxa101) (Schizosaccharomyces pombe (strain 972 / ATCC 24843) (Fission yeast)).